Consider the following 99-residue polypeptide: A-type ATP synthase subunit F (99 aa).

The protein belongs to the V-ATPase F subunit family. Has multiple subunits with at least A(3), B(3), C, D, E, F, H, I and proteolipid K(x).

The protein resides in the cell membrane. Component of the A-type ATP synthase that produces ATP from ADP in the presence of a proton gradient across the membrane. This is A-type ATP synthase subunit F from Methanocella arvoryzae (strain DSM 22066 / NBRC 105507 / MRE50).